Here is a 31-residue protein sequence, read N- to C-terminus: Cytochrome b6-f complex subunit 6 (31 aa).

A helical membrane pass occupies residues 3–23 (VFLGYIIFLAAFFGLATGLFL).

The protein belongs to the PetL family. In terms of assembly, the 4 large subunits of the cytochrome b6-f complex are cytochrome b6, subunit IV (17 kDa polypeptide, PetD), cytochrome f and the Rieske protein, while the 4 small subunits are PetG, PetL, PetM and PetN. The complex functions as a dimer.

It is found in the plastid. The protein localises to the chloroplast thylakoid membrane. In terms of biological role, component of the cytochrome b6-f complex, which mediates electron transfer between photosystem II (PSII) and photosystem I (PSI), cyclic electron flow around PSI, and state transitions. PetL is important for photoautotrophic growth as well as for electron transfer efficiency and stability of the cytochrome b6-f complex. The sequence is that of Cytochrome b6-f complex subunit 6 from Pyropia yezoensis (Susabi-nori).